We begin with the raw amino-acid sequence, 542 residues long: Coiled-coil domain-containing protein 60 (542 aa).

Residues 70–97 (TMLQEETAFKKHQQHLKKLQEEELNKFQ) adopt a coiled-coil conformation. Disordered stretches follow at residues 228 to 284 (ATRK…EEEV) and 334 to 358 (QTTH…TQKK). Composition is skewed to low complexity over residues 245–261 (SGGS…NPSS) and 342–351 (RSSTTSGESH).

The sequence is that of Coiled-coil domain-containing protein 60 (Ccdc60) from Rattus norvegicus (Rat).